The primary structure comprises 386 residues: Magnesium transporter MRS2-7 (386 aa).

Transmembrane regions (helical) follow at residues 321–341 (LMLS…GIFG) and 355–375 (IFKW…VIIL). The short motif at 341-343 (GMN) is the Required for magnesium transport activity element.

It belongs to the CorA metal ion transporter (MIT) (TC 1.A.35.5) family. Isoform 1 is expressed in the whole plant. Isoform 4 is expressed only in roots and flowers.

The protein localises to the endoplasmic reticulum membrane. Functionally, low-affinity magnesium transporter that mediates the influx of magnesium. The polypeptide is Magnesium transporter MRS2-7 (MRS2-7) (Arabidopsis thaliana (Mouse-ear cress)).